Here is a 644-residue protein sequence, read N- to C-terminus: Kininogen-1 (644 aa).

Positions 1–18 (MKLITILFLCSRLLLSLT) are cleaved as a signal peptide. Gln-19 is subject to Pyrrolidone carboxylic acid; in mature form. The Cystatin kininogen-type 1 domain maps to 28–132 (CNDKDLFKAV…TQTCQITPAE (105 aa)). 9 disulfide bridges follow: Cys-28–Cys-614, Cys-83–Cys-94, Cys-107–Cys-126, Cys-142–Cys-145, Cys-206–Cys-218, Cys-229–Cys-248, Cys-264–Cys-267, Cys-328–Cys-340, and Cys-351–Cys-370. Residue Asn-48 is glycosylated (N-linked (GlcNAc...) (complex) asparagine). Residues 120–153 (SVATQTCQITPAEGPVVTAQYDCLGCVHPISTQS) form an O-glycosylated at one site only region. Positions 151-254 (TQSPDLEPIL…SQNCDIYPGK (104 aa)) constitute a Cystatin kininogen-type 2 domain. The N-linked (GlcNAc...) asparagine glycan is linked to Asn-169. Residue Asn-205 is glycosylated (N-linked (GlcNAc...) (complex) asparagine). Positions 273 to 376 (TNSPELEETL…TVNCQPLGMI (104 aa)) constitute a Cystatin kininogen-type 3 domain. A glycan (N-linked (GlcNAc...) (complex) asparagine) is linked at Asn-294. Ser-332 carries the phosphoserine; by FAM20C modification. Pro-383 carries the post-translational modification 4-hydroxyproline; partial. Residues 387–555 (PFRSSRIGEI…TPIPSLAKPG (169 aa)) are disordered. An O-linked (GalNAc...) threonine glycan is attached at Thr-401. The span at 418–434 (DSGKEQGHTRRHDWGHE) shows a compositional bias: basic and acidic residues. Repeats lie at residues 420–449 (GKEQGHTRRHDWGHEKQRKHNLGHGHKHER), 450–479 (DQGHGHQRGHGLGHGHEQQHGLGHGHKFKL), and 480–510 (DDDLEHQGGHVLDHGHKHKHGHGHGKHKNKG). The span at 435–446 (KQRKHNLGHGHK) shows a compositional bias: basic residues. A compositionally biased stretch (basic and acidic residues) spans 477-493 (FKLDDDLEHQGGHVLDH). Positions 494–518 (GHKHKHGHGHGKHKNKGKKNGKHNG) are enriched in basic residues. Over residues 524–539 (LASSSEDSTTPSAQTQ) the composition is skewed to polar residues. O-linked (GalNAc...) threonine glycosylation is found at Thr-533, Thr-542, Thr-546, Thr-557, and Thr-571. The O-linked (GalNAc...) serine glycan is linked to Ser-577. An O-linked (GalNAc...) threonine glycan is attached at Thr-628.

Interacts (high molecular weight kininogen) (via amino acids 402-532) with triafestin-1 and triafestin-2, anticoagulant proteins from Triatoma infestans. Interacts (high molecular weight kininogen) (via amino acids 402-532) with short form salivary protein D7R1, an anticoagulant protein from Anopheles stephensi. Interacts (high molecular weight kininogen) (via amino acids 421-466 and 459-513) with haemaphysalin, an anticoagulant protein from Haemaphysalis longicornis. Bradykinin is inactivated by ACE, which removes the dipeptide Arg-Phe from its C-terminus. Post-translationally, bradykinin is released from kininogen by plasma kallikrein. In terms of processing, hydroxylation of Pro-383 occurs prior to the release of bradykinin. Phosphorylated by FAM20C in the extracellular medium. Post-translationally, N- and O-glycosylated. O-glycosylated with core 1 or possibly core 8 glycans. In terms of processing, (Microbial infection) Bradykinin is generated upon proteolytic cleavage by S.pyogenes SpeB to produce hypotension during septic shock. As to expression, secreted in plasma. T-kinin is detected in malignant ovarian, colon and breast carcinomas, but not in benign tumors.

Its subcellular location is the secreted. It is found in the extracellular space. Its function is as follows. Kininogens are inhibitors of thiol proteases. HMW-kininogen plays an important role in blood coagulation by helping to position optimally prekallikrein and factor XI next to factor XII; HMW-kininogen inhibits the thrombin- and plasmin-induced aggregation of thrombocytes. LMW-kininogen inhibits the aggregation of thrombocytes. LMW-kininogen is in contrast to HMW-kininogen not involved in blood clotting. The active peptide bradykinin is a potent vasodilatator that is released from HMW-kininogen shows a variety of physiological effects: (A) influence in smooth muscle contraction, (B) induction of hypotension, (C) natriuresis and diuresis, (D) decrease in blood glucose level, (E) it is a mediator of inflammation and causes (E1) increase in vascular permeability, (E2) stimulation of nociceptors (4E3) release of other mediators of inflammation (e.g. prostaglandins), (F) it has a cardioprotective effect (directly via bradykinin action, indirectly via endothelium-derived relaxing factor action). The polypeptide is Kininogen-1 (KNG1) (Homo sapiens (Human)).